A 414-amino-acid polypeptide reads, in one-letter code: NADH-quinone oxidoreductase subunit D (414 aa).

Belongs to the complex I 49 kDa subunit family. As to quaternary structure, NDH-1 is composed of 14 different subunits. Subunits NuoB, C, D, E, F, and G constitute the peripheral sector of the complex.

The protein resides in the cell inner membrane. It carries out the reaction a quinone + NADH + 5 H(+)(in) = a quinol + NAD(+) + 4 H(+)(out). In terms of biological role, NDH-1 shuttles electrons from NADH, via FMN and iron-sulfur (Fe-S) centers, to quinones in the respiratory chain. The immediate electron acceptor for the enzyme in this species is believed to be ubiquinone. Couples the redox reaction to proton translocation (for every two electrons transferred, four hydrogen ions are translocated across the cytoplasmic membrane), and thus conserves the redox energy in a proton gradient. The chain is NADH-quinone oxidoreductase subunit D from Akkermansia muciniphila (strain ATCC BAA-835 / DSM 22959 / JCM 33894 / BCRC 81048 / CCUG 64013 / CIP 107961 / Muc).